The following is a 275-amino-acid chain: Exosome complex component Rrp42 (275 aa).

It belongs to the RNase PH family. Rrp42 subfamily. As to quaternary structure, component of the archaeal exosome complex. Forms a hexameric ring-like arrangement composed of 3 Rrp41-Rrp42 heterodimers. The hexameric ring associates with a trimer of Rrp4 and/or Csl4 subunits.

It localises to the cytoplasm. Its function is as follows. Non-catalytic component of the exosome, which is a complex involved in RNA degradation. Contributes to the structuring of the Rrp41 active site. The sequence is that of Exosome complex component Rrp42 from Sulfurisphaera tokodaii (strain DSM 16993 / JCM 10545 / NBRC 100140 / 7) (Sulfolobus tokodaii).